Here is a 135-residue protein sequence, read N- to C-terminus: Phosphoribosyl-AMP cyclohydrolase (135 aa).

D78 contacts Mg(2+). C79 contributes to the Zn(2+) binding site. Mg(2+) contacts are provided by D80 and D82. Residues C96 and C103 each contribute to the Zn(2+) site.

Belongs to the PRA-CH family. In terms of assembly, homodimer. Mg(2+) is required as a cofactor. It depends on Zn(2+) as a cofactor.

Its subcellular location is the cytoplasm. It catalyses the reaction 1-(5-phospho-beta-D-ribosyl)-5'-AMP + H2O = 1-(5-phospho-beta-D-ribosyl)-5-[(5-phospho-beta-D-ribosylamino)methylideneamino]imidazole-4-carboxamide. Its pathway is amino-acid biosynthesis; L-histidine biosynthesis; L-histidine from 5-phospho-alpha-D-ribose 1-diphosphate: step 3/9. Its function is as follows. Catalyzes the hydrolysis of the adenine ring of phosphoribosyl-AMP. The sequence is that of Phosphoribosyl-AMP cyclohydrolase from Cupriavidus metallidurans (strain ATCC 43123 / DSM 2839 / NBRC 102507 / CH34) (Ralstonia metallidurans).